Reading from the N-terminus, the 149-residue chain is uncharacterized protein (149 aa).

This is an uncharacterized protein from Acanthamoeba polyphaga mimivirus (APMV).